We begin with the raw amino-acid sequence, 461 residues long: Lysosomal proton-coupled steroid conjugate and bile acid symporter SLC46A3 (461 aa).

Positions 1–25 (MKISFIEPAILLYAFAMTLTIPLTA) are cleaved as a signal peptide. Topologically, residues 26–70 (QYVYRRIWEETGNYTFTSSSNVSECEQNKSSSTFAFQEEVQKKAS) are extracellular. 3 N-linked (GlcNAc...) asparagine glycosylation sites follow: asparagine 38, asparagine 46, and asparagine 53. A helical membrane pass occupies residues 71–91 (LFSLQVEISGLIPGLVSTFML). The Cytoplasmic portion of the chain corresponds to 92–103 (LSSSDNHGRKLP). The helical transmembrane segment at 104–124 (MVLSSLGSLGTNLWLCAMSYF) threads the bilayer. Topologically, residues 125–135 (DLPLQLLVAST) are extracellular. Residues 136–156 (FIGALFGNYTTFWGACFAYIV) form a helical membrane-spanning segment. Topologically, residues 157–170 (DQEKEYKHRIIRIA) are cytoplasmic. The helical transmembrane segment at 171-191 (VLDFMLGVVTGLTGLSSGYFI) threads the bilayer. Residues 192-197 (RELGFA) lie on the Extracellular side of the membrane. The helical transmembrane segment at 198–218 (WSYFIIAVVVLVNLAYILFFL) threads the bilayer. The Cytoplasmic segment spans residues 219–260 (SDPIKESSSQIVTMSCSESLKDLFYRTYMLFKNGSCKRRSLL). Residues 261-281 (CLLIFTLVVYFFVVFGITPVF) form a helical membrane-spanning segment. At 282 to 301 (TLYELGPPLCWNEVYIGYGS) the chain is on the extracellular side. The helical transmembrane segment at 302–322 (ALGSLSFLSSFLGIWLFSYCL) threads the bilayer. The Cytoplasmic segment spans residues 323-324 (KD). Residues 325 to 345 (IHIAYVGIFTTMVGMMLTAFT) traverse the membrane as a helical segment. Topologically, residues 346 to 347 (RT) are extracellular. Residues 348 to 368 (TLMMFLVRISFFFTIMPLSIL) traverse the membrane as a helical segment. Residues 369-381 (RSMLSKVVHSTEQ) lie on the Cytoplasmic side of the membrane. Residues 382–402 (GVLFACIAFLETLGGVTSTSA) form a helical membrane-spanning segment. Residues 403–415 (YNGIYSATVAWYP) lie on the Extracellular side of the membrane. The chain crosses the membrane as a helical span at residues 416–436 (GFVFLLSAGLLVLPAVSLCMV). Topologically, residues 437 to 461 (KCIGWEEGSYTLLIHDEPSEHTSDS) are cytoplasmic. The Tyrosine-based lysosomal-sorting motif signature appears at 446-449 (YTLL).

Belongs to the major facilitator superfamily. SLC46A family.

The protein resides in the lysosome membrane. The enzyme catalyses estrone 3-sulfate(out) + n H(+)(out) = estrone 3-sulfate(in) + n H(+)(in). It carries out the reaction 25-hydroxyvitamin D3 sulfate(out) + n H(+)(out) = 25-hydroxyvitamin D3 sulfate(in) + n H(+)(in). The catalysed reaction is cholate(out) + n H(+)(out) = cholate(in) + n H(+)(in). It catalyses the reaction glycocholate(out) + n H(+)(out) = glycocholate(in) + n H(+)(in). The enzyme catalyses taurocholate(out) + n H(+)(out) = taurocholate(in) + n H(+)(in). It carries out the reaction dehydroepiandrosterone 3-sulfate(out) + n H(+)(out) = dehydroepiandrosterone 3-sulfate(in) + n H(+)(in). The catalysed reaction is N-acetyl-D-muramoyl-L-alanyl-D-isoglutamine(out) + n H(+)(out) = N-acetyl-D-muramoyl-L-alanyl-D-isoglutamine(in) + n H(+)(in). It catalyses the reaction 2',3'-cGAMP(out) + n H(+)(out) = 2',3'-cGAMP(in) + n H(+)(in). Functionally, lysosomal proton-coupled steroid conjugate and bile acid transporter. Preferentially recognizes lipophilic steroid conjugates or bile acis as endogenous substrates and seems to mediate escape from lysosomes to the cytoplasm. Modulates hepatic cytosolic copper homeostasis, maybe acting as a lysosomal copper transporter and sequestering copper ions in the lysosome. Delivers pathogen-associated molecular patterns to cytosolic pattern recognition receptors as part of the innate immune response to microbes. Selectively transports bacterial muramyl dipeptide (MDP) into the cytosol for recognition by NOD2, triggering inflammatory responses. Likely acts as a redundant importer of cyclic GMP-AMP dinucleotides (cGAMPs) in monocyte and macrophage cell lineages. The transport mechanism, its electrogenicity and stoichiometry remain to be elucidated. The protein is Lysosomal proton-coupled steroid conjugate and bile acid symporter SLC46A3 (Slc46a3) of Rattus norvegicus (Rat).